The primary structure comprises 538 residues: Carboxypeptidase 2 (538 aa).

The first 21 residues, Met-1–Ala-21, serve as a signal peptide directing secretion. Asn-46 carries an N-linked (GlcNAc...) asparagine glycan. Residues Pro-53 to Glu-76 form a disordered region. A Peptidase M14 domain is found at Gly-71–Ala-351. Zn(2+)-binding residues include His-136, Glu-139, and His-224. Glu-322 acts as the Proton donor/acceptor in catalysis. N-linked (GlcNAc...) asparagine glycans are attached at residues Asn-393 and Asn-459.

This sequence belongs to the peptidase M14 family. The cofactor is Zn(2+).

The protein resides in the secreted. Extracellular metalloprotease that contributes to pathogenicity. The protein is Carboxypeptidase 2 (MCPB) of Trichophyton rubrum (Athlete's foot fungus).